The chain runs to 64 residues: Large ribosomal subunit protein bL35 (64 aa).

The protein belongs to the bacterial ribosomal protein bL35 family.

The sequence is that of Large ribosomal subunit protein bL35 from Ureaplasma urealyticum serovar 10 (strain ATCC 33699 / Western).